A 715-amino-acid polypeptide reads, in one-letter code: Probable GTP diphosphokinase RSH3, chloroplastic (715 aa).

A chloroplast-targeting transit peptide spans 1-64 (MVVATTIALY…LLFSGASVKS (64 aa)). Over residues 65-74 (SSSSSSSHPS) the composition is skewed to low complexity. The disordered stretch occupies residues 65-84 (SSSSSSSHPSVGEELASIRH). Residues 237 to 341 (YLQHCVETAM…IKLADRLHNM (105 aa)) form the HD domain.

Belongs to the RelA/SpoT family. As to expression, expressed in roots, hypocotyls, shoots, cotyledons, rosette and cauline leaves, stems, petals, sepals, stamens, pistils and siliques.

It localises to the plastid. The protein resides in the chloroplast. The catalysed reaction is GTP + ATP = guanosine 3'-diphosphate 5'-triphosphate + AMP. Its function is as follows. Possesses ppGpp (guanosine 3'-diphosphate 5'-diphosphate) synthetase activity in vitro and is able to functionally complement E.coli relA mutants. May be involved in a rapid plant ppGpp-mediated response to pathogens and other stresses. The polypeptide is Probable GTP diphosphokinase RSH3, chloroplastic (RSH3) (Arabidopsis thaliana (Mouse-ear cress)).